A 236-amino-acid polypeptide reads, in one-letter code: 2,3,4,5-tetrahydropyridine-2,6-dicarboxylate N-acetyltransferase (236 aa).

This sequence belongs to the transferase hexapeptide repeat family. DapH subfamily.

The catalysed reaction is (S)-2,3,4,5-tetrahydrodipicolinate + acetyl-CoA + H2O = L-2-acetamido-6-oxoheptanedioate + CoA. The protein operates within amino-acid biosynthesis; L-lysine biosynthesis via DAP pathway; LL-2,6-diaminopimelate from (S)-tetrahydrodipicolinate (acetylase route): step 1/3. Its function is as follows. Catalyzes the transfer of an acetyl group from acetyl-CoA to tetrahydrodipicolinate. This is 2,3,4,5-tetrahydropyridine-2,6-dicarboxylate N-acetyltransferase from Clostridium botulinum (strain Kyoto / Type A2).